Here is a 124-residue protein sequence, read N- to C-terminus: Small ribosomal subunit protein uS12 (124 aa).

Position 89 is a 3-methylthioaspartic acid (Asp89). The interval 105-124 (SGVSDRRQGRSKYGAKRPKS) is disordered. A compositionally biased stretch (basic residues) spans 113–124 (GRSKYGAKRPKS).

This sequence belongs to the universal ribosomal protein uS12 family. As to quaternary structure, part of the 30S ribosomal subunit. Contacts proteins S8 and S17. May interact with IF1 in the 30S initiation complex.

In terms of biological role, with S4 and S5 plays an important role in translational accuracy. Functionally, interacts with and stabilizes bases of the 16S rRNA that are involved in tRNA selection in the A site and with the mRNA backbone. Located at the interface of the 30S and 50S subunits, it traverses the body of the 30S subunit contacting proteins on the other side and probably holding the rRNA structure together. The combined cluster of proteins S8, S12 and S17 appears to hold together the shoulder and platform of the 30S subunit. The polypeptide is Small ribosomal subunit protein uS12 (Colwellia psychrerythraea (strain 34H / ATCC BAA-681) (Vibrio psychroerythus)).